Here is an 82-residue protein sequence, read N- to C-terminus: MTFSADDINQTLDASGLRCPEPVMMVRKTVRLMQEGETLLVIADDPATVRDIPSFCRFMDHTLLASDTEQPPYRYLIRKGLN.

The active-site Cysteine persulfide intermediate is the Cys-19.

This sequence belongs to the sulfur carrier protein TusA family.

Its subcellular location is the cytoplasm. Functionally, sulfur carrier protein which probably makes part of a sulfur-relay system. This Tolumonas auensis (strain DSM 9187 / NBRC 110442 / TA 4) protein is Sulfur carrier protein TusA.